Consider the following 331-residue polypeptide: Osmotic avoidance abnormal protein 8 (331 aa).

The signal sequence occupies residues 1–21 (MPAKMLKWLLIHIFLIHSIFC).

As to expression, expressed in the hypodermal syncitium but not in hypodermal seam cells.

It is found in the secreted. Negative regulator of the osmotic stress response. Acts via the transmembrane protein ptr-23. This Caenorhabditis elegans protein is Osmotic avoidance abnormal protein 8 (osm-8).